The sequence spans 150 residues: D-aminoacyl-tRNA deacylase (150 aa).

Positions 138 to 139 (GP) match the Gly-cisPro motif, important for rejection of L-amino acids motif.

The protein belongs to the DTD family. As to quaternary structure, homodimer.

It is found in the cytoplasm. It catalyses the reaction glycyl-tRNA(Ala) + H2O = tRNA(Ala) + glycine + H(+). The catalysed reaction is a D-aminoacyl-tRNA + H2O = a tRNA + a D-alpha-amino acid + H(+). Functionally, an aminoacyl-tRNA editing enzyme that deacylates mischarged D-aminoacyl-tRNAs. Also deacylates mischarged glycyl-tRNA(Ala), protecting cells against glycine mischarging by AlaRS. Acts via tRNA-based rather than protein-based catalysis; rejects L-amino acids rather than detecting D-amino acids in the active site. By recycling D-aminoacyl-tRNA to D-amino acids and free tRNA molecules, this enzyme counteracts the toxicity associated with the formation of D-aminoacyl-tRNA entities in vivo and helps enforce protein L-homochirality. This is D-aminoacyl-tRNA deacylase from Sorangium cellulosum (strain So ce56) (Polyangium cellulosum (strain So ce56)).